A 345-amino-acid chain; its full sequence is Alkaline phosphatase isozyme conversion protein (345 aa).

The N-terminal stretch at 1–24 is a signal peptide; the sequence is MFSALRHRTAALALGVCFILPVHA. Residues histidine 117, aspartate 143, glutamate 176, and aspartate 204 each contribute to the Zn(2+) site.

This sequence belongs to the peptidase M28 family. M28C subfamily.

This protein, presumably an aminopeptidase, mediates the conversion of E.coli alkaline phosphatase isozyme 1, to isozymes 2 and 3 by removing, one by one, the two N-terminal arginine residues. The sequence is that of Alkaline phosphatase isozyme conversion protein (iap) from Escherichia coli (strain K12).